Here is a 125-residue protein sequence, read N- to C-terminus: Snaclec coagulation factor IX/factor X-binding protein subunit B (125 aa).

The region spanning 1–122 is the C-type lectin domain; it reads DCSSGWTAYG…SLFGHFVCKS (122 aa). 3 disulfides stabilise this stretch: cysteine 2–cysteine 13, cysteine 30–cysteine 120, and cysteine 97–cysteine 112. Ca(2+)-binding residues include serine 41 and glutamate 47.

The protein belongs to the snaclec family. Heterodimer of subunits A and B; disulfide-linked. In terms of tissue distribution, expressed by the venom gland.

It localises to the secreted. Its function is as follows. Anticoagulant protein which binds to coagulation factor IX (F9) and coagulation factor X (F10) in the presence of calcium. It may bind the gamma-carboxyglutamic acid-domain regions of factors with a 1 to 1 stoichiometry. The dissociation constant (K(d)) are 6.6 nM for factor IX (F9) and 125 nM for factor X (F10). Does not bind carbohydrates. This chain is Snaclec coagulation factor IX/factor X-binding protein subunit B, found in Echis carinatus (Saw-scaled viper).